The following is a 225-amino-acid chain: PKHD-type hydroxylase YbiX (225 aa).

The region spanning Thr-78–Ser-177 is the Fe2OG dioxygenase domain. His-96, Asp-98, and His-158 together coordinate Fe cation. Arg-168 lines the 2-oxoglutarate pocket.

Fe(2+) is required as a cofactor. It depends on L-ascorbate as a cofactor.

The protein is PKHD-type hydroxylase YbiX of Shigella sonnei (strain Ss046).